Reading from the N-terminus, the 861-residue chain is Leucine--tRNA ligase (861 aa).

The 'HIGH' region motif lies at 42-52 (PYPSGKLHMGH). The short motif at 618-622 (KMSKS) is the 'KMSKS' region element. An ATP-binding site is contributed by Lys-621.

It belongs to the class-I aminoacyl-tRNA synthetase family.

The protein resides in the cytoplasm. The enzyme catalyses tRNA(Leu) + L-leucine + ATP = L-leucyl-tRNA(Leu) + AMP + diphosphate. In Buchnera aphidicola subsp. Baizongia pistaciae (strain Bp), this protein is Leucine--tRNA ligase.